The following is a 506-amino-acid chain: GMP synthase [glutamine-hydrolyzing] (506 aa).

A Glutamine amidotransferase type-1 domain is found at 2–190; sequence SIVILDFGSQ…FLDICGVTRD (189 aa). The active-site Nucleophile is the cysteine 79. Catalysis depends on residues histidine 165 and glutamate 167. Residues 191–381 enclose the GMPS ATP-PPase domain; that stretch reads WNAEHIVDEL…LGLPDHIRMR (191 aa). Residue 219–225 participates in ATP binding; it reads SGGVDSS.

As to quaternary structure, homodimer.

The catalysed reaction is XMP + L-glutamine + ATP + H2O = GMP + L-glutamate + AMP + diphosphate + 2 H(+). Its pathway is purine metabolism; GMP biosynthesis; GMP from XMP (L-Gln route): step 1/1. Functionally, catalyzes the synthesis of GMP from XMP. The sequence is that of GMP synthase [glutamine-hydrolyzing] (guaA) from Deinococcus radiodurans (strain ATCC 13939 / DSM 20539 / JCM 16871 / CCUG 27074 / LMG 4051 / NBRC 15346 / NCIMB 9279 / VKM B-1422 / R1).